The chain runs to 173 residues: uncharacterized protein (173 aa).

Positions 16–133 (DLVLRPETIT…KHVLIRFPNK (118 aa)) constitute an MSP domain. Over residues 141 to 163 (KKMEEDDMKQQKERNKLSNEKMG) the composition is skewed to basic and acidic residues. The tract at residues 141–173 (KKMEEDDMKQQKERNKLSNEKMGIRNQNMGEKK) is disordered.

This is an uncharacterized protein from Caenorhabditis elegans.